A 70-amino-acid chain; its full sequence is Cytochrome c oxidase subunit 8B, mitochondrial (70 aa).

The transit peptide at 1–24 directs the protein to the mitochondrion; sequence MPRLPPALRLLQPPLRCWVVPKLH. Topologically, residues 25-35 are mitochondrial matrix; the sequence is VSAKPARTPTS. The helical transmembrane segment at 36–59 threads the bilayer; sequence PAEQAVGLSMMFLSFLVPAGWVLS. Residues 60–70 are Mitochondrial intermembrane-facing; it reads HLESYKKSSTA.

This sequence belongs to the cytochrome c oxidase VIII family. Component of the cytochrome c oxidase (complex IV, CIV), a multisubunit enzyme composed of 14 subunits. The complex is composed of a catalytic core of 3 subunits MT-CO1, MT-CO2 and MT-CO3, encoded in the mitochondrial DNA, and 11 supernumerary subunits COX4I, COX5A, COX5B, COX6A, COX6B, COX6C, COX7A, COX7B, COX7C, COX8 and NDUFA4, which are encoded in the nuclear genome. The complex exists as a monomer or a dimer and forms supercomplexes (SCs) in the inner mitochondrial membrane with NADH-ubiquinone oxidoreductase (complex I, CI) and ubiquinol-cytochrome c oxidoreductase (cytochrome b-c1 complex, complex III, CIII), resulting in different assemblies (supercomplex SCI(1)III(2)IV(1) and megacomplex MCI(2)III(2)IV(2)).

The protein localises to the mitochondrion inner membrane. Its pathway is energy metabolism; oxidative phosphorylation. Component of the cytochrome c oxidase, the last enzyme in the mitochondrial electron transport chain which drives oxidative phosphorylation. The respiratory chain contains 3 multisubunit complexes succinate dehydrogenase (complex II, CII), ubiquinol-cytochrome c oxidoreductase (cytochrome b-c1 complex, complex III, CIII) and cytochrome c oxidase (complex IV, CIV), that cooperate to transfer electrons derived from NADH and succinate to molecular oxygen, creating an electrochemical gradient over the inner membrane that drives transmembrane transport and the ATP synthase. Cytochrome c oxidase is the component of the respiratory chain that catalyzes the reduction of oxygen to water. Electrons originating from reduced cytochrome c in the intermembrane space (IMS) are transferred via the dinuclear copper A center (CU(A)) of subunit 2 and heme A of subunit 1 to the active site in subunit 1, a binuclear center (BNC) formed by heme A3 and copper B (CU(B)). The BNC reduces molecular oxygen to 2 water molecules using 4 electrons from cytochrome c in the IMS and 4 protons from the mitochondrial matrix. The protein is Cytochrome c oxidase subunit 8B, mitochondrial (COX8B) of Eulemur fulvus fulvus (Brown lemur).